Reading from the N-terminus, the 232-residue chain is RNA chaperone ProQ (232 aa).

Positions 105 to 182 (EAKARVQAQR…REEQHTPVSD (78 aa)) are disordered. Basic and acidic residues-rich tracts occupy residues 117–138 (QQAK…PPRE) and 147–177 (RRKE…EEQH).

It belongs to the ProQ family.

The protein localises to the cytoplasm. Functionally, RNA chaperone with significant RNA binding, RNA strand exchange and RNA duplexing activities. May regulate ProP activity through an RNA-based, post-transcriptional mechanism. The polypeptide is RNA chaperone ProQ (Escherichia coli O139:H28 (strain E24377A / ETEC)).